We begin with the raw amino-acid sequence, 388 residues long: Flavin-dependent monooxygenase (388 aa).

Residues 12 to 15, 34 to 36, 44 to 47, R105, Y267, D289, and 296 to 302 contribute to the FAD site; these read VGVA, EKS, QALD, and PLSGQGN.

Belongs to the aromatic-ring hydroxylase family. Requires FAD as cofactor.

It carries out the reaction a tetracycline + NADPH + O2 + H(+) = a (1S,10aS)-3-(CONH2)-1-(Me2N)-3,3a,4,6-(HO)4-2,5-dioxo-1H,10aH,11H,11aH-cyclopenta[b]anthracene + CO + NADP(+) + H2O. It catalyses the reaction 7-chlorotetracycline + NADPH + O2 + H(+) = (1S,10S,10aS)-3-(CONH2)-9-Cl-1-(Me2N)-3,3a,4,10-(HO)4-10-Me-2,5-dioxo-1H,10aH,11H,11aH-cyclopenta[b]anthracen-6-olate + CO + NADP(+) + H2O. Its activity is regulated as follows. Inhibited by anhydrotetracycline. Functionally, an FAD-requiring monooxygenase active on tetracycline antibiotic and some of its derivatives, which leads to their inactivation. Expression in E.coli confers high resistance to tetracycline and oxytetracycline, does not confer resistance to minocycline or tigecycline. Degrades tetracycline and oxytetracycline; the reaction requires NADPH. Degrades and confers resistance to chlortetracycline. The protein is Flavin-dependent monooxygenase (tet(50)) of Unknown prokaryotic organism.